Reading from the N-terminus, the 1406-residue chain is Enhancer of mRNA-decapping protein 4 (1406 aa).

Ala-2 bears the N-acetylalanine mark. Ser-3 and Ser-6 each carry phosphoserine. Lys-125 carries the post-translational modification N6-acetyllysine. WD repeat units lie at residues 174–214 (GFTG…GKIQ), 230–277 (NHFR…SSHN), 295–334 (GHSTCLSEGALSPDGTVLATASHDGFVKFWQIYIEGQDEP), and 342–393 (PHDG…CLQT). Ser-560, Ser-565, Ser-583, and Ser-585 each carry phosphoserine. 2 disordered regions span residues 604-631 (SLQQISASPSSSSSSSSSSSSSSSSSSS) and 667-686 (SLTLNSSSSSLQASPRSLLP). The segment covering 609 to 631 (SASPSSSSSSSSSSSSSSSSSSS) has biased composition (low complexity). Phosphoserine occurs at positions 680, 712, 727, and 729. The interval 719–744 (EPLGLPQASPSRTRSPDVISSASTAL) is disordered. The segment covering 726–744 (ASPSRTRSPDVISSASTAL) has biased composition (polar residues). Residue Thr-731 is modified to Phosphothreonine. A phosphoserine mark is found at Ser-733 and Ser-745. 2 disordered regions span residues 782 to 855 (HLLS…NGLQ) and 873 to 951 (QRDS…VAEP). 2 stretches are compositionally biased toward polar residues: residues 823 to 832 (EVATPDSQVW) and 841 to 852 (ETCSTLTESPRN). At Thr-826 the chain carries Phosphothreonine. Residues Ser-849 and Ser-876 each carry the phosphoserine modification. The residue at position 879 (Thr-879) is a Phosphothreonine. Phosphoserine occurs at positions 880, 884, 892, 895, and 897. Thr-906 carries the post-translational modification Phosphothreonine. A coiled-coil region spans residues 971-1030 (HNQEELLQRLCAQLEGLQSTVTDHVERALETRHEQEQRRLERALAEGQQRGGQLQEQLTQ). Ser-1385 bears the Phosphoserine mark.

It belongs to the WD repeat EDC4 family. In terms of assembly, part of a decapping complex consisting of DCP1A, DCP2, EDC3, EDC4 and probably DDX6. Part of a complex consisting of DCP1A, EDC3, EDC4 and DDX6. Part of a complex consisting of DCP1B, EDC3, EDC4 and DDX6. Interacts with DCP2. Interacts with RC3H1. Interacts with NBDY. Interacts with Tex19.1 and, probably, Tex19.2. Interacts with LSM14A. Interacts with DDX6.

The protein resides in the cytoplasm. It localises to the P-body. The protein localises to the nucleus. Its function is as follows. In the process of mRNA degradation, seems to play a role in mRNA decapping. Component of a complex containing DCP2 and DCP1A which functions in decapping of ARE-containing mRNAs. Promotes complex formation between DCP1A and DCP2. Enhances the catalytic activity of DCP2 (in vitro). The chain is Enhancer of mRNA-decapping protein 4 from Mus musculus (Mouse).